A 326-amino-acid chain; its full sequence is UDP-3-O-acylglucosamine N-acyltransferase (326 aa).

Histidine 235 acts as the Proton acceptor in catalysis.

This sequence belongs to the transferase hexapeptide repeat family. LpxD subfamily. Homotrimer.

The catalysed reaction is a UDP-3-O-[(3R)-3-hydroxyacyl]-alpha-D-glucosamine + a (3R)-hydroxyacyl-[ACP] = a UDP-2-N,3-O-bis[(3R)-3-hydroxyacyl]-alpha-D-glucosamine + holo-[ACP] + H(+). It functions in the pathway bacterial outer membrane biogenesis; LPS lipid A biosynthesis. Catalyzes the N-acylation of UDP-3-O-acylglucosamine using 3-hydroxyacyl-ACP as the acyl donor. Is involved in the biosynthesis of lipid A, a phosphorylated glycolipid that anchors the lipopolysaccharide to the outer membrane of the cell. This Helicobacter hepaticus (strain ATCC 51449 / 3B1) protein is UDP-3-O-acylglucosamine N-acyltransferase.